Consider the following 161-residue polypeptide: Globin CTT-VIIB-5/CTT-VIIB-9 (161 aa).

The N-terminal stretch at 1 to 16 (MKFFAVLALCIVGAIA) is a signal peptide. In terms of domain architecture, Globin spans 18-161 (PLTADEASLV…NTFAIVVPRL (144 aa)). Residues H76 and H111 each coordinate heme b.

The protein belongs to the globin family. Homodimer.

This is Globin CTT-VIIB-5/CTT-VIIB-9 (CTT-7B5) from Chironomus thummi thummi (Midge).